The following is a 197-amino-acid chain: uncharacterized protein (197 aa).

An N-terminal signal peptide occupies residues 1–30 (MSTYIIINIALLIAIVALIFFLSKKTKSEA).

This is an uncharacterized protein from Acanthamoeba polyphaga (Amoeba).